A 172-amino-acid polypeptide reads, in one-letter code: MPRRRSAAPPPRRAAPARSASTAAALPPRTMAPPPAPSRVQQAPPPTAVQGGSSPGFFGNLVSTAAGVGIGSAIGHTVGSVITGGFSGSGSNNAPADTSVPQSSYSNSVPEAAYGSAPPSTFASSAISEEAKNACKGDAKMFADCINEHEFSQCSYYLEQLKACQAMWSNQQ.

Disordered stretches follow at residues 1-54 (MPRR…GGSS) and 82-111 (ITGG…SVPE). Residues 14–29 (AAPARSASTAAALPPR) show a composition bias toward low complexity. Residues 30–47 (TMAPPPAPSRVQQAPPPT) show a composition bias toward pro residues. A compositionally biased stretch (polar residues) spans 89-109 (SGSNNAPADTSVPQSSYSNSV).

This is an uncharacterized protein from Schizosaccharomyces pombe (strain 972 / ATCC 24843) (Fission yeast).